Reading from the N-terminus, the 256-residue chain is Biosynthetic peptidoglycan transglycosylase (256 aa).

Residues 26–48 (VARWLAYVGGVFAGAWLATQLYY) traverse the membrane as a helical segment.

It belongs to the glycosyltransferase 51 family.

The protein resides in the cell inner membrane. The enzyme catalyses [GlcNAc-(1-&gt;4)-Mur2Ac(oyl-L-Ala-gamma-D-Glu-L-Lys-D-Ala-D-Ala)](n)-di-trans,octa-cis-undecaprenyl diphosphate + beta-D-GlcNAc-(1-&gt;4)-Mur2Ac(oyl-L-Ala-gamma-D-Glu-L-Lys-D-Ala-D-Ala)-di-trans,octa-cis-undecaprenyl diphosphate = [GlcNAc-(1-&gt;4)-Mur2Ac(oyl-L-Ala-gamma-D-Glu-L-Lys-D-Ala-D-Ala)](n+1)-di-trans,octa-cis-undecaprenyl diphosphate + di-trans,octa-cis-undecaprenyl diphosphate + H(+). It functions in the pathway cell wall biogenesis; peptidoglycan biosynthesis. In terms of biological role, peptidoglycan polymerase that catalyzes glycan chain elongation from lipid-linked precursors. In Burkholderia pseudomallei (strain K96243), this protein is Biosynthetic peptidoglycan transglycosylase.